Consider the following 76-residue polypeptide: Omega-agatoxin-Aa3b (76 aa).

Cystine bridges form between C2–C19, C9–C25, C16–C52, C18–C40, C27–C38, and C59–C67.

This sequence belongs to the neurotoxin 04 (omega-agtx) family. 03 (type II/III omega-agtx) subfamily. In terms of tissue distribution, expressed by the venom gland.

The protein resides in the secreted. Its function is as follows. Omega-agatoxins are antagonists of voltage-gated calcium channels. This toxin blocks calcium channels in insect central neurons but not at peripheral neuromuscular junctions. In vertebrates, it is broadly active against all high-threshold Cav1/CACNA1 channels and Cav2.2/CACNA1B channels. This is Omega-agatoxin-Aa3b from Agelenopsis aperta (North American funnel-web spider).